The following is a 370-amino-acid chain: MAFRRRTKSYPLFSQEFIIHNHADIGFCLVLCVLIGLMFEVTAKTAFLFILPQYNISVPTADSETVHYHYGPKDLVTILFYVVITIIFHAVVQEYILDKISKRLHLSKVKHSKFNESGQLLVFHLSAVAWCFYVIVTEGYLTNPRSLWEDYPHVYLSFQVKFFYLGQLAYWLHSLPELYFQKVRKEEVPRQLQYICLYLLHITGAYLLNLSRLGLILLLLQYSTEALFHMARLFHFADENNERLFNAWAAVFGVTRLFILTLAVLTIGFGLARVENQVFDPEKGNFNTLPCRLGMLLLVCVAQAWLMWRFIHSQLRHWREYWKEQSAKRRVSAVPRPPAKLLKREPGYHENGVVKAENGTSSRTKKLKSP.

Residues 1–22 (MAFRRRTKSYPLFSQEFIIHNH) lie on the Cytoplasmic side of the membrane. Residues 23 to 43 (ADIGFCLVLCVLIGLMFEVTA) form a helical membrane-spanning segment. Residues 44–75 (KTAFLFILPQYNISVPTADSETVHYHYGPKDL) lie on the Extracellular side of the membrane. Asn-55 is a glycosylation site (N-linked (GlcNAc...) asparagine). The chain crosses the membrane as a helical span at residues 76-96 (VTILFYVVITIIFHAVVQEYI). Over 97–119 (LDKISKRLHLSKVKHSKFNESGQ) the chain is Cytoplasmic. The region spanning 112-321 (SKFNESGQLL…HSQLRHWREY (210 aa)) is the TLC domain. A helical transmembrane segment spans residues 120–140 (LLVFHLSAVAWCFYVIVTEGY). Over 141–159 (LTNPRSLWEDYPHVYLSFQ) the chain is Extracellular. A helical membrane pass occupies residues 160-180 (VKFFYLGQLAYWLHSLPELYF). At 181-191 (QKVRKEEVPRQ) the chain is on the cytoplasmic side. A helical membrane pass occupies residues 192-209 (LQYICLYLLHITGAYLLN). At 210–214 (LSRLG) the chain is on the extracellular side. Residues 215–235 (LILLLLQYSTEALFHMARLFH) traverse the membrane as a helical segment. The Cytoplasmic segment spans residues 236–250 (FADENNERLFNAWAA). A helical transmembrane segment spans residues 251-271 (VFGVTRLFILTLAVLTIGFGL). At 272-287 (ARVENQVFDPEKGNFN) the chain is on the extracellular side. A helical transmembrane segment spans residues 288-308 (TLPCRLGMLLLVCVAQAWLMW). Topologically, residues 309 to 370 (RFIHSQLRHW…SSRTKKLKSP (62 aa)) are cytoplasmic. Residues 332–370 (SAVPRPPAKLLKREPGYHENGVVKAENGTSSRTKKLKSP) are disordered.

Belongs to the TRAM family. In terms of assembly, interacts with COL1A1. Interacts with SERCA2B.

Its subcellular location is the membrane. In terms of biological role, necessary for collagen type I synthesis. May couple the activity of the ER Ca(2+) pump SERCA2B with the activity of the translocon. This coupling may increase the local Ca(2+) concentration at the site of collagen synthesis, and a high Ca(2+) concentration may be necessary for the function of molecular chaperones involved in collagen folding. Required for proper insertion of the first transmembrane helix N-terminus of TM4SF20 into the ER lumen, may act as a ceramide sensor for regulated alternative translocation (RAT). In Mus musculus (Mouse), this protein is Translocating chain-associated membrane protein 2 (Tram2).